The primary structure comprises 520 residues: Cytochrome b5 reductase 4 (520 aa).

M1 is subject to N-acetylmethionine. The span at 1-16 (MLNVPSQSFPGPSSQQ) shows a compositional bias: low complexity. The disordered stretch occupies residues 1-27 (MLNVPSQSFPGPSSQQRVASGGRSKVP). Residues 54 to 130 (LIEVTEEELK…LKECLVGRMA (77 aa)) form the Cytochrome b5 heme-binding domain. Heme is bound by residues H89 and H112. The region spanning 164–255 (PSSPSYDWFQ…KENTSWKCLG (92 aa)) is the CS domain. An FAD-binding FR-type domain is found at 272–384 (LFYRKCQLVS…SNPEGNFIIS (113 aa)). Residues 364–379 (DQLQ…NPEG) and 391–423 (DLFL…KVKL) each bind FAD.

This sequence belongs to the flavoprotein pyridine nucleotide cytochrome reductase family. Requires FAD as cofactor.

The protein resides in the endoplasmic reticulum. The catalysed reaction is 2 Fe(III)-[cytochrome b5] + NADH = 2 Fe(II)-[cytochrome b5] + NAD(+) + H(+). Its function is as follows. NADH-cytochrome b5 reductase involved in endoplasmic reticulum stress response pathway. Plays a critical role in protecting pancreatic beta-cells against oxidant stress, possibly by protecting the cell from excess buildup of reactive oxygen species (ROS). The protein is Cytochrome b5 reductase 4 (CYB5R4) of Bos taurus (Bovine).